A 185-amino-acid chain; its full sequence is Ribosome-recycling factor (185 aa).

The interval 138–157 is disordered; the sequence is ELKKLEKDHTASEDEVKRAQ.

The protein belongs to the RRF family.

The protein resides in the cytoplasm. Functionally, responsible for the release of ribosomes from messenger RNA at the termination of protein biosynthesis. May increase the efficiency of translation by recycling ribosomes from one round of translation to another. The polypeptide is Ribosome-recycling factor (Desulfitobacterium hafniense (strain DSM 10664 / DCB-2)).